The chain runs to 389 residues: tRNA-specific 2-thiouridylase MnmA (389 aa).

ATP contacts are provided by residues Gly30–Ser37 and Leu56. The active-site Nucleophile is Cys117. A disulfide bridge links Cys117 with Cys216. Gly142 contacts ATP. Residues Lys166–Gln168 are interaction with tRNA. Cys216 (cysteine persulfide intermediate) is an active-site residue. The interaction with tRNA stretch occupies residues Arg321–Tyr322.

Belongs to the MnmA/TRMU family.

It localises to the cytoplasm. The catalysed reaction is S-sulfanyl-L-cysteinyl-[protein] + uridine(34) in tRNA + AH2 + ATP = 2-thiouridine(34) in tRNA + L-cysteinyl-[protein] + A + AMP + diphosphate + H(+). Its function is as follows. Catalyzes the 2-thiolation of uridine at the wobble position (U34) of tRNA, leading to the formation of s(2)U34. This Synechococcus sp. (strain CC9902) protein is tRNA-specific 2-thiouridylase MnmA.